A 204-amino-acid polypeptide reads, in one-letter code: MIGRLCGTAEQIEDGRCLIDVSGVGYVVFCSARSLAALPAPPARATLLVETQVREDAITLFGFIDAAERDWFRLLTTIQGVGAKVALNLLSALPPDQLASAIAASDRGAITRAPGVGPKLAARLISELRERIAAMPTGSAFIPTGTAPPVAPPQGKLADALSALVNLGYRRAEAEAALSAVQAEAGEDAALDELIRGGLRRLAR.

Residues Met1–Ile64 form a domain I region. The domain II stretch occupies residues Asp65–Pro143. A flexible linker region spans residues Thr144–Gln154. Residues Gln154 to Arg204 form a domain III region.

It belongs to the RuvA family. As to quaternary structure, homotetramer. Forms an RuvA(8)-RuvB(12)-Holliday junction (HJ) complex. HJ DNA is sandwiched between 2 RuvA tetramers; dsDNA enters through RuvA and exits via RuvB. An RuvB hexamer assembles on each DNA strand where it exits the tetramer. Each RuvB hexamer is contacted by two RuvA subunits (via domain III) on 2 adjacent RuvB subunits; this complex drives branch migration. In the full resolvosome a probable DNA-RuvA(4)-RuvB(12)-RuvC(2) complex forms which resolves the HJ.

Its subcellular location is the cytoplasm. Functionally, the RuvA-RuvB-RuvC complex processes Holliday junction (HJ) DNA during genetic recombination and DNA repair, while the RuvA-RuvB complex plays an important role in the rescue of blocked DNA replication forks via replication fork reversal (RFR). RuvA specifically binds to HJ cruciform DNA, conferring on it an open structure. The RuvB hexamer acts as an ATP-dependent pump, pulling dsDNA into and through the RuvAB complex. HJ branch migration allows RuvC to scan DNA until it finds its consensus sequence, where it cleaves and resolves the cruciform DNA. This Acidiphilium cryptum (strain JF-5) protein is Holliday junction branch migration complex subunit RuvA.